The following is a 168-amino-acid chain: Putative insulin-like growth factor 2 antisense gene protein (168 aa).

Disordered stretches follow at residues 1 to 91 (MSKR…ERSN) and 108 to 168 (PLRR…RPGK). 2 stretches are compositionally biased toward basic residues: residues 59 to 70 (AQRRRGSARRGA) and 159 to 168 (RWRQPGRPGK).

The polypeptide is Putative insulin-like growth factor 2 antisense gene protein (IGF2-AS) (Homo sapiens (Human)).